Reading from the N-terminus, the 256-residue chain is Glucanase inhibitor protein 2 (256 aa).

The first 15 residues, 1–15, serve as a signal peptide directing secretion; it reads MKLISTIAAATTAFG. Positions 27–254 constitute a Peptidase S1 domain; that stretch reads IFGGGIIPSG…ATEWINSVTK (228 aa). Cysteine 54 and cysteine 70 are disulfide-bonded. 4 N-linked (GlcNAc...) asparagine glycosylation sites follow: asparagine 87, asparagine 102, asparagine 107, and asparagine 157. 2 disulfide bridges follow: cysteine 177/cysteine 189 and cysteine 199/cysteine 230.

The protein belongs to the peptidase S1 family. Forms an apoplastic complex with host endoglucanases in tomato leaves during P.infestans infection.

It localises to the secreted. Its function is as follows. Secreted effector that suppresses host plant glucan elicitor-mediated defense responses. Targets host endoglucanases and inhibits the endoglucanase-mediated release of elicitor-active glucan oligosaccharides from P.infestans cell walls. This is Glucanase inhibitor protein 2 from Phytophthora infestans (Potato late blight agent).